The chain runs to 318 residues: Melanocyte-stimulating hormone receptor (318 aa).

Topologically, residues 1 to 37 are extracellular; it reads MPMQGAQRKLLGSLNSTPTATSNLGLAANRTGAPCLE. The N-linked (GlcNAc...) asparagine glycan is linked to asparagine 29. The chain crosses the membrane as a helical span at residues 38 to 63; sequence LPIPNGLFLSLGLVSLVENVLVVAAI. At 64–72 the chain is on the cytoplasmic side; it reads AKNRNLHSS. A helical transmembrane segment spans residues 73–93; it reads MYCFICCLALSDLLVSGSNML. Over 94–118 the chain is Extracellular; it reads ETAVILLLEAGVLATRASVVQQLHN. Residues 119–140 traverse the membrane as a helical segment; it reads TIDVLTCSSMLCSLCFLGAIAV. Residues 141 to 163 lie on the Cytoplasmic side of the membrane; it reads DRYISIFYALRYHSIMTLPRAQR. A helical membrane pass occupies residues 164-183; sequence AVAAIWVASVLSSTLFITYY. Residues 184 to 191 lie on the Extracellular side of the membrane; the sequence is DHAAVLLC. Residues 192–211 traverse the membrane as a helical segment; the sequence is LMVFFLAMLVLMAVLYVHML. Residues 212 to 240 are Cytoplasmic-facing; the sequence is ARARQHAQGIIRLHKRQPPAHKGFGLRGA. Residues 241-266 traverse the membrane as a helical segment; that stretch reads ATLTILLGIFFLCWGPFFLCLTLVVF. Topologically, residues 267–279 are extracellular; sequence CPQHLTCNCIFKN. Residues 280–300 traverse the membrane as a helical segment; sequence FKVFLTLIICNTIIDPLIYAF. Over 301-317 the chain is Cytoplasmic; sequence RSQELRRMLKEVLGRGR.

It belongs to the G-protein coupled receptor 1 family. As to quaternary structure, interacts with MGRN1, but does not undergo MGRN1-mediated ubiquitination; this interaction competes with GNAS-binding and thus inhibits agonist-induced cAMP production. Interacts with OPN3; the interaction results in a decrease in MC1R-mediated cAMP signaling and ultimately a decrease in melanin production in melanocytes.

Its subcellular location is the cell membrane. Receptor for MSH (alpha, beta and gamma) and ACTH. The activity of this receptor is mediated by G proteins which activate adenylate cyclase. Mediates melanogenesis, the production of eumelanin (black/brown) and phaeomelanin (red/yellow), via regulation of cAMP signaling in melanocytes. The chain is Melanocyte-stimulating hormone receptor (MC1R) from Leontopithecus rosalia (Golden lion tamarin).